The primary structure comprises 347 residues: MSDILSSLAYLTGKPVASAKIKAQPEHFQVREDLGFAFTGEGEHLMVRIRKTGENTSFVANELAKACGVKSKDVSWAGLKDRHAVTEQWLSVHLPKGETPDFSTFLAQYPSIEILATDRHNKKLRPGDLIGNEFVVTLSEVTDMADVEQRLEKVKQVGVPNYFGSQRFGNDGNNLDEARRWGRENVRTRNQNKRSMYLSAARSWIFNRIVSARLENGVFDKFIDGDIAQTSQGLLAVDASNLADMQNKLALSEVEITAALAGDNALPTQADALALEQPFIDEEPDLMALIRGNRMRHDRREIALKPKDLAWNVEGNNITLTFSLDAGSFATSIVRELVNEVKVEREY.

Residue aspartate 81 is the Nucleophile of the active site. The 148-residue stretch at 158-305 (GVPNYFGSQR…RHDRREIALK (148 aa)) folds into the TRUD domain.

This sequence belongs to the pseudouridine synthase TruD family.

The enzyme catalyses uridine(13) in tRNA = pseudouridine(13) in tRNA. Its function is as follows. Responsible for synthesis of pseudouridine from uracil-13 in transfer RNAs. In Vibrio parahaemolyticus serotype O3:K6 (strain RIMD 2210633), this protein is tRNA pseudouridine synthase D.